The following is a 616-amino-acid chain: uncharacterized protein (616 aa).

It belongs to the UbiD family.

This is an uncharacterized protein from Helicobacter pylori (strain ATCC 700392 / 26695) (Campylobacter pylori).